Reading from the N-terminus, the 399-residue chain is [Pyruvate dehydrogenase (acetyl-transferring)] kinase, mitochondrial (399 aa).

The transit peptide at 1–18 (MFLTRRLLGPFTSAIARK) directs the protein to the mitochondrion. A Histidine kinase domain is found at 123-360 (VVETMAEGLI…DAMIFLKAIP (238 aa)). ATP contacts are provided by residues 247-254 (ELFKNSMR), Asp-286, 305-306 (ST), and 321-326 (GYGYGL).

Belongs to the PDK/BCKDK protein kinase family.

The protein localises to the mitochondrion matrix. The enzyme catalyses L-seryl-[pyruvate dehydrogenase E1 alpha subunit] + ATP = O-phospho-L-seryl-[pyruvate dehydrogenase E1 alpha subunit] + ADP + H(+). Functionally, inhibits the mitochondrial pyruvate dehydrogenase complex by phosphorylation of the E1 alpha subunit, thus contributing to the regulation of glucose metabolism. This chain is [Pyruvate dehydrogenase (acetyl-transferring)] kinase, mitochondrial, found in Ascaris suum (Pig roundworm).